A 324-amino-acid chain; its full sequence is Glyoxylate/hydroxypyruvate reductase B (324 aa).

Catalysis depends on residues arginine 237 and glutamate 266. Histidine 285 acts as the Proton donor in catalysis.

It belongs to the D-isomer specific 2-hydroxyacid dehydrogenase family. GhrB subfamily. In terms of assembly, homodimer.

It is found in the cytoplasm. It carries out the reaction glycolate + NADP(+) = glyoxylate + NADPH + H(+). It catalyses the reaction (R)-glycerate + NAD(+) = 3-hydroxypyruvate + NADH + H(+). The enzyme catalyses (R)-glycerate + NADP(+) = 3-hydroxypyruvate + NADPH + H(+). Its function is as follows. Catalyzes the NADPH-dependent reduction of glyoxylate and hydroxypyruvate into glycolate and glycerate, respectively. In Salmonella paratyphi B (strain ATCC BAA-1250 / SPB7), this protein is Glyoxylate/hydroxypyruvate reductase B.